The following is a 41-amino-acid chain: Photosystem II reaction center protein L (41 aa).

Residues 20–40 (SLYLGLLLVFVVGLLFSSYFL) form a helical membrane-spanning segment.

The protein belongs to the PsbL family. In terms of assembly, PSII is composed of 1 copy each of membrane proteins PsbA, PsbB, PsbC, PsbD, PsbE, PsbF, PsbH, PsbI, PsbJ, PsbK, PsbL, PsbM, PsbT, PsbX, PsbY, PsbZ, Psb30/Ycf12, peripheral proteins PsbO, CyanoQ (PsbQ), PsbU, PsbV and a large number of cofactors. It forms dimeric complexes.

It is found in the cellular thylakoid membrane. Its function is as follows. One of the components of the core complex of photosystem II (PSII). PSII is a light-driven water:plastoquinone oxidoreductase that uses light energy to abstract electrons from H(2)O, generating O(2) and a proton gradient subsequently used for ATP formation. It consists of a core antenna complex that captures photons, and an electron transfer chain that converts photonic excitation into a charge separation. This subunit is found at the monomer-monomer interface and is required for correct PSII assembly and/or dimerization. This is Photosystem II reaction center protein L from Synechococcus sp. (strain JA-2-3B'a(2-13)) (Cyanobacteria bacterium Yellowstone B-Prime).